The primary structure comprises 307 residues: Nucleotide-binding protein Sca_0414 (307 aa).

ATP is bound at residue 19-26; sequence GMSGAGKS. GTP is bound at residue 70 to 73; it reads DLRG.

It belongs to the RapZ-like family.

Functionally, displays ATPase and GTPase activities. This is Nucleotide-binding protein Sca_0414 from Staphylococcus carnosus (strain TM300).